Reading from the N-terminus, the 363-residue chain is dTDP-L-rhamnose 4-epimerase (363 aa).

NAD(+) contacts are provided by residues 18–24 (GGAGFIG), 68–69 (DV), and 90–94 (LAAET). Residues Ser-136 and Tyr-191 each coordinate substrate. 2 residues coordinate NAD(+): Tyr-191 and Lys-195. Residue Tyr-191 is the Proton acceptor of the active site. Substrate-binding residues include Asn-220 and Arg-259.

Belongs to the NAD(P)-dependent epimerase/dehydratase family. NAD(+) serves as cofactor.

The catalysed reaction is dTDP-6-deoxy-beta-L-talose = dTDP-beta-L-rhamnose. It participates in bacterial outer membrane biogenesis; LPS O-antigen biosynthesis. In terms of biological role, catalyzes the interconvertion of dTDP-6-deoxy-L-talose and dTDP-L-rhamnose. The equilibrium is strongly toward dTDP-L-rhamnose. The polypeptide is dTDP-L-rhamnose 4-epimerase (wbiB) (Burkholderia thailandensis (strain ATCC 700388 / DSM 13276 / CCUG 48851 / CIP 106301 / E264)).